Consider the following 310-residue polypeptide: Ribosomal protein L11 methyltransferase (310 aa).

The S-adenosyl-L-methionine site is built by Thr-156, Gly-179, Asp-201, and Asn-246.

This sequence belongs to the methyltransferase superfamily. PrmA family.

The protein localises to the cytoplasm. The catalysed reaction is L-lysyl-[protein] + 3 S-adenosyl-L-methionine = N(6),N(6),N(6)-trimethyl-L-lysyl-[protein] + 3 S-adenosyl-L-homocysteine + 3 H(+). Functionally, methylates ribosomal protein L11. The chain is Ribosomal protein L11 methyltransferase from Desulfatibacillum aliphaticivorans.